The chain runs to 163 residues: Beta-carbonic anhydrase 1 (163 aa).

Zn(2+)-binding residues include Cys-35, Asp-37, His-88, and Cys-91.

It belongs to the beta-class carbonic anhydrase family. As to quaternary structure, homotetramer. The cofactor is Zn(2+).

The enzyme catalyses hydrogencarbonate + H(+) = CO2 + H2O. Catalyzes the reversible hydration of carbon dioxide to form bicarbonate. The polypeptide is Beta-carbonic anhydrase 1 (Mycobacterium bovis (strain ATCC BAA-935 / AF2122/97)).